Reading from the N-terminus, the 152-residue chain is TRAPP-associated protein TCA17 (152 aa).

It belongs to the TRAPP small subunits family. Sedlin subfamily. As to quaternary structure, interacts with the TRAPP II complex; TRAPP II subunits TRS33 and TRS65 are required for this interaction.

Its subcellular location is the golgi apparatus. The protein localises to the trans-Golgi network. Functionally, required, together with the TRAPP II subunit TRS33, for TRAPP II complex assembly or stability, and for proper Golgi localization of TRAPP and the Rab GTPase YPT31. The chain is TRAPP-associated protein TCA17 (TCA17) from Saccharomyces cerevisiae (strain ATCC 204508 / S288c) (Baker's yeast).